Reading from the N-terminus, the 361-residue chain is Sensor protein VanSC (361 aa).

2 helical membrane-spanning segments follow: residues Phe16 to Ile36 and Trp59 to Met79. A Histidine kinase domain is found at Tyr144–Ala359. A Phosphohistidine; by autocatalysis modification is found at His147. Glu252 serves as a coordination point for Mg(2+).

In terms of processing, autophosphorylated.

It localises to the membrane. It catalyses the reaction ATP + protein L-histidine = ADP + protein N-phospho-L-histidine.. The chain is Sensor protein VanSC from Enterococcus gallinarum.